The primary structure comprises 722 residues: Mesentericin-Y105 transport/processing ATP-binding protein MesD (722 aa).

The 128-residue stretch at 16-143 (QVDERDCGVA…EEWTGVSIFI (128 aa)) folds into the Peptidase C39 domain. Cysteine 22 is an active-site residue. 8 consecutive transmembrane segments (helical) span residues 171–191 (LLVI…ILGS), 210–230 (LGIV…LSYA), 242–262 (LSID…MSFF), 287–307 (TMLS…VLVV), 311–331 (TLFL…WLFM), 401–421 (SLLQ…LVMT), 429–449 (LITY…IINL), and 518–538 (IALV…LVNF). In terms of domain architecture, ABC transmembrane type-1 spans 173-455 (VINIVIAALL…IINLQTKLQQ (283 aa)). Positions 489-722 (LVADHITYKY…GGFYASLFNH (234 aa)) constitute an ABC transporter domain. Residue 522 to 529 (GISGSGKS) participates in ATP binding.

Belongs to the ABC transporter superfamily.

The protein localises to the cell membrane. In terms of biological role, involved in the export process of the bacteriocin mesentericin-Y105. This is Mesentericin-Y105 transport/processing ATP-binding protein MesD (mesD) from Leuconostoc mesenteroides.